The following is a 241-amino-acid chain: Histone H1-II (241 aa).

Positions 1-10 (MASDAPEVKA) are enriched in basic and acidic residues. 2 disordered regions span residues 1–27 (MASD…THPP) and 89–241 (NSYK…AKKA). The segment covering 11–20 (PKAKTQKKPK) has biased composition (basic residues). The 72-residue stretch at 24–95 (THPPYIQMVT…KVKNSYKLSD (72 aa)) folds into the H15 domain. Over residues 99-111 (SKAKAAAKPKAAP) the composition is skewed to basic residues. A run of 3 repeats spans residues 111–116 (PKKAAA), 117–122 (PKKAAA), and 123–128 (PKKAKA). Residues 111–217 (PKKAAAPKKA…KAATPKKAKA (107 aa)) form an 8 X 6 AA repeats of P-K-K-A-[AK]-A region. Positions 129 to 155 (PKKEGEKKAVKPKSEKKAAKPKTEKKP) are enriched in basic and acidic residues. Basic residues-rich tracts occupy residues 156-184 (KAAK…KATP) and 194-241 (AAPK…AKKA). Residues 183 to 186 (TPKK) mediate DNA binding. A run of 5 repeats spans residues 184 to 189 (PKKAAA), 190 to 195 (PKKAAA), 196 to 201 (PKKAKA), 204 to 209 (PKKAKA), and 212 to 217 (PKKAKA). 2 DNA-binding regions span residues 203–206 (TPKK) and 211–214 (TPKK).

This sequence belongs to the histone H1/H5 family.

It localises to the nucleus. The protein localises to the chromosome. Histones H1 are necessary for the condensation of nucleosome chains into higher-order structures. The protein is Histone H1-II (H1-II) of Volvox carteri (Green alga).